We begin with the raw amino-acid sequence, 173 residues long: RNA silencing suppressor p19 (173 aa).

The segment covering 1 to 21 (MERAIQRSDAREQANSERWDG) has biased composition (basic and acidic residues). Positions 1–34 (MERAIQRSDAREQANSERWDGRCGGTITPFKLPD) are disordered.

Belongs to the tombusvirus protein p19 family. Homodimer.

In terms of biological role, viral suppressor of RNA silencing which binds specifically to silencing RNAs (siRNAs). Acts as a molecular caliper to specifically select siRNAs based on the length of the duplex region of the RNA. The chain is RNA silencing suppressor p19 from Cucumis sativus (Cucumber).